The chain runs to 254 residues: UPF0246 protein CPE2152 (254 aa).

It belongs to the UPF0246 family.

The protein is UPF0246 protein CPE2152 of Clostridium perfringens (strain 13 / Type A).